The sequence spans 103 residues: Small ribosomal subunit protein uS10 (103 aa).

The protein belongs to the universal ribosomal protein uS10 family. As to quaternary structure, part of the 30S ribosomal subunit.

Its function is as follows. Involved in the binding of tRNA to the ribosomes. The sequence is that of Small ribosomal subunit protein uS10 from Bordetella petrii (strain ATCC BAA-461 / DSM 12804 / CCUG 43448).